Here is a 199-residue protein sequence, read N- to C-terminus: Oleosin 21.2 kDa (199 aa).

Residues 1-14 (MADTHRVDRTDRHF) are compositionally biased toward basic and acidic residues. Residues 1–31 (MADTHRVDRTDRHFQFQSPYEGGRGQGQYEG) form a disordered region. Ala2 bears the N-acetylalanine mark. The polar stretch occupies residues 2 to 56 (ADTHRVDRTDRHFQFQSPYEGGRGQGQYEGDRGYGGGGYKSMMPESGPSSTQVLS). Over residues 22-31 (GGRGQGQYEG) the composition is skewed to gly residues. The next 3 helical transmembrane spans lie at 51–71 (STQVLSLLIGVPVVGSLLALA), 72–92 (GLLLAGSVIGLMVALPLFLLF), and 96–116 (IVPAALTIGLAMTGFLASGMF). The tract at residues 57 to 128 (LLIGVPVVGS…TGLSSISWVM (72 aa)) is hydrophobic. The segment at 159–199 (KGKEMGQHVQNKAQDVKQYDISKPHDTTTKGHETQGRTTAA) is disordered. Residues 172-193 (QDVKQYDISKPHDTTTKGHETQ) show a composition bias toward basic and acidic residues.

This sequence belongs to the oleosin family.

It localises to the lipid droplet. Its subcellular location is the membrane. Functionally, may have a structural role to stabilize the lipid body during desiccation of the seed by preventing coalescence of the oil. Probably interacts with both lipid and phospholipid moieties of lipid bodies. May also provide recognition signals for specific lipase anchorage in lipolysis during seedling growth. This is Oleosin 21.2 kDa from Arabidopsis thaliana (Mouse-ear cress).